A 260-amino-acid polypeptide reads, in one-letter code: LIM and SH3 domain protein 1 (260 aa).

Position 1 is an N-acetylmethionine (Met1). Residues 5-56 form the LIM zinc-binding domain; it reads CARCCKIVYPTEKVNCLDKFWHKACFHCETCKMTLNMKNYKGYEKKPYCNAH. An N6-acetyllysine modification is found at Lys42. Nebulin repeat units lie at residues 61–95 and 97–131; these read SFTM…KNKG and GFSV…KSRM. At Thr68 the chain carries Phosphothreonine. An N6-methyllysine modification is found at Lys75. Ser99 carries the phosphoserine modification. Thr104 carries the phosphothreonine modification. At Lys112 the chain carries N6-succinyllysine. Phosphoserine occurs at positions 118 and 134. The tract at residues 123–204 is disordered; it reads HEEFEKSRMG…QRSAPGGGGK (82 aa). A compositionally biased stretch (basic and acidic residues) spans 140–155; that stretch reads ECERRDPQESSYRRPQ. Over residues 171–180 the composition is skewed to low complexity; it reads QQPQQQPAAQ. The 60-residue stretch at 201 to 260 folds into the SH3 domain; that stretch reads GGGKRYRAVYDYSAADEDEVSFQDGDTIVNVQQIDDGWMYGTVERTGDTGMLPANYVEAI.

In terms of assembly, interacts with F-actin. Interacts with ANKRD54. Interacts with KBTBD10. Phosphorylated.

Its subcellular location is the cytoplasm. It is found in the cell cortex. The protein resides in the cytoskeleton. Its function is as follows. Plays an important role in the regulation of dynamic actin-based, cytoskeletal activities. Agonist-dependent changes in LASP1 phosphorylation may also serve to regulate actin-associated ion transport activities, not only in the parietal cell but also in certain other F-actin-rich secretory epithelial cell types. The protein is LIM and SH3 domain protein 1 (LASP1) of Bos taurus (Bovine).